Here is a 243-residue protein sequence, read N- to C-terminus: Glucosamine-6-phosphate deaminase (243 aa).

Aspartate 67 (proton acceptor; for enolization step) is an active-site residue. Asparagine 137 (for ring-opening step) is an active-site residue. Histidine 139 (proton acceptor; for ring-opening step) is an active-site residue. Glutamate 144 serves as the catalytic For ring-opening step.

The protein belongs to the glucosamine/galactosamine-6-phosphate isomerase family. NagB subfamily.

It catalyses the reaction alpha-D-glucosamine 6-phosphate + H2O = beta-D-fructose 6-phosphate + NH4(+). Its pathway is amino-sugar metabolism; N-acetylneuraminate degradation; D-fructose 6-phosphate from N-acetylneuraminate: step 5/5. Its function is as follows. Catalyzes the reversible isomerization-deamination of glucosamine 6-phosphate (GlcN6P) to form fructose 6-phosphate (Fru6P) and ammonium ion. In Staphylococcus epidermidis (strain ATCC 35984 / DSM 28319 / BCRC 17069 / CCUG 31568 / BM 3577 / RP62A), this protein is Glucosamine-6-phosphate deaminase.